Here is a 487-residue protein sequence, read N- to C-terminus: 6-phosphogluconate dehydrogenase, decarboxylating 3, chloroplastic (487 aa).

M1 carries the post-translational modification N-acetylmethionine. Residues 13–18 (GLAVMG), 36–38 (NRT), 80–82 (VKA), and N108 contribute to the NADP(+) site. Substrate-binding positions include N108 and 134–136 (SGG). K188 serves as the catalytic Proton acceptor. 191-192 (HN) is a binding site for substrate. E195 (proton donor) is an active-site residue. Substrate is bound by residues Y196, K266, R293, R458, and H464.

Belongs to the 6-phosphogluconate dehydrogenase family. As to quaternary structure, forms homodimer. Forms heterodimers with PGD1 or PGD2.

The protein localises to the plastid. The protein resides in the chloroplast. It localises to the cytoplasm. It is found in the cytosol. It carries out the reaction 6-phospho-D-gluconate + NADP(+) = D-ribulose 5-phosphate + CO2 + NADPH. Its pathway is carbohydrate degradation; pentose phosphate pathway; D-ribulose 5-phosphate from D-glucose 6-phosphate (oxidative stage): step 3/3. In terms of biological role, catalyzes the oxidative decarboxylation of 6-phosphogluconate to ribulose 5-phosphate and CO(2), with concomitant reduction of NADP to NADPH. The chain is 6-phosphogluconate dehydrogenase, decarboxylating 3, chloroplastic from Arabidopsis thaliana (Mouse-ear cress).